An 86-amino-acid chain; its full sequence is Omega-theraphotoxin-Hhn1f 3 (86 aa).

The N-terminal stretch at 1-21 (MKSIVFVALFGLALLAVACSA) is a signal peptide. A propeptide spanning residues 22–50 (SEDAHKELLKEVVRAMVVDKTDAVQAEER) is cleaved from the precursor. 3 disulfide bridges follow: C52–C66, C59–C71, and C65–C78.

Belongs to the neurotoxin 10 (Hwtx-1) family. 17 (Hntx-9) subfamily. As to expression, expressed by the venom gland.

It is found in the secreted. In terms of biological role, ion channel inhibitor. The chain is Omega-theraphotoxin-Hhn1f 3 from Cyriopagopus hainanus (Chinese bird spider).